The following is a 382-amino-acid chain: Myb-like transcription factor (382 aa).

3 consecutive Myb-like domains span residues 1–57 (MPRS…RWSK), 58–108 (ITGA…QHCL), and 109–160 (DPSL…ITLF). The segment covering 194 to 210 (MSMDASEDGDDAEDDQT) has biased composition (acidic residues). A disordered region spans residues 194 to 240 (MSMDASEDGDDAEDDQTPDSYTSISTSSFDDILGGSSSSPSAADTMT). Residues 211-240 (PDSYTSISTSSFDDILGGSSSSPSAADTMT) show a composition bias toward polar residues.

The protein resides in the nucleus. In terms of biological role, transcription factor; part of the gene cluster that mediates the biosynthesis of 1233A, a natural compound known as an inhibitor of HMG-CoA synthase in the mevalonate pathway and with antibacterial and antifungal activities. Involved in hygromycin B-induced transcriptional control of the cluster. The chain is Myb-like transcription factor from Fusarium sp.